A 119-amino-acid chain; its full sequence is Protein TusC (119 aa).

It belongs to the DsrF/TusC family. Heterohexamer, formed by a dimer of trimers. The hexameric TusBCD complex contains 2 copies each of TusB, TusC and TusD. The TusBCD complex interacts with TusE.

It localises to the cytoplasm. Its function is as follows. Part of a sulfur-relay system required for 2-thiolation of 5-methylaminomethyl-2-thiouridine (mnm(5)s(2)U) at tRNA wobble positions. This chain is Protein TusC, found in Klebsiella pneumoniae (strain 342).